A 782-amino-acid polypeptide reads, in one-letter code: U-box domain-containing protein 7 (782 aa).

In terms of domain architecture, U-box spans 271-345 (VPPEELRCPI…ASWCEQNGTQ (75 aa)). 5 ARM repeats span residues 456–499 (EEAR…NLAV), 502–541 (NRNK…SCLD), 542–581 (EAKS…NLST), 583–623 (SPNI…NLAS), and 626–665 (EGKD…ILCN). Over residues 707–729 (EERQQRDQPSSNRDEPPQKEPAR) the composition is skewed to basic and acidic residues. Residues 707 to 765 (EERQQRDQPSSNRDEPPQKEPARKSLSAPLSVHGSTPASASVQDYEPRVLSKSMSRRKS) form a disordered region. Residues 739–748 (HGSTPASASV) show a composition bias toward polar residues.

It catalyses the reaction S-ubiquitinyl-[E2 ubiquitin-conjugating enzyme]-L-cysteine + [acceptor protein]-L-lysine = [E2 ubiquitin-conjugating enzyme]-L-cysteine + N(6)-ubiquitinyl-[acceptor protein]-L-lysine.. It participates in protein modification; protein ubiquitination. Functionally, functions as an E3 ubiquitin ligase. The polypeptide is U-box domain-containing protein 7 (PUB7) (Arabidopsis thaliana (Mouse-ear cress)).